Reading from the N-terminus, the 308-residue chain is Ribosomal protein L11 methyltransferase (308 aa).

4 residues coordinate S-adenosyl-L-methionine: Thr-148, Gly-169, Asp-191, and Asn-239.

This sequence belongs to the methyltransferase superfamily. PrmA family.

It localises to the cytoplasm. It carries out the reaction L-lysyl-[protein] + 3 S-adenosyl-L-methionine = N(6),N(6),N(6)-trimethyl-L-lysyl-[protein] + 3 S-adenosyl-L-homocysteine + 3 H(+). Functionally, methylates ribosomal protein L11. In Psychrobacter arcticus (strain DSM 17307 / VKM B-2377 / 273-4), this protein is Ribosomal protein L11 methyltransferase.